Reading from the N-terminus, the 935-residue chain is Protein translocase subunit SecA (935 aa).

Residues Gln-90, 108-112 (GEGKT), and Asp-504 contribute to the ATP site.

This sequence belongs to the SecA family. In terms of assembly, monomer and homodimer. Part of the essential Sec protein translocation apparatus which comprises SecA, SecYEG and auxiliary proteins SecDF. Other proteins may also be involved.

Its subcellular location is the cell inner membrane. The protein resides in the cellular thylakoid membrane. It is found in the cytoplasm. It catalyses the reaction ATP + H2O + cellular proteinSide 1 = ADP + phosphate + cellular proteinSide 2.. In terms of biological role, part of the Sec protein translocase complex. Interacts with the SecYEG preprotein conducting channel. Has a central role in coupling the hydrolysis of ATP to the transfer of proteins into and across the cell membrane, serving as an ATP-driven molecular motor driving the stepwise translocation of polypeptide chains across the membrane. Functionally, probably participates in protein translocation into and across both the cytoplasmic and thylakoid membranes in cyanobacterial cells. This Gloeothece citriformis (strain PCC 7424) (Cyanothece sp. (strain PCC 7424)) protein is Protein translocase subunit SecA.